The following is a 226-amino-acid chain: MTSPCKHGDRPPGRHDLVFVSPAGWRAMLDARDDLAADSLLARWPKMRWPTIRRRALPHEATGVALGLPLPPSAGKKRVALLVEIDHVASVARPPSLQQARAYAPRNWWPTLDRLDGLALRHSVDARVYGSLAWQSLTGLDYVTGRSDLDVLFEFRSETDIDRFVADVAAIETSAPMRLDGELMSADGAAVNWREVHGGASELLVKSIERVVLLDRHQFISGATGS.

Active-site residues include D148 and D150.

This sequence belongs to the MdcG family.

The catalysed reaction is apo-[malonate decarboxylase ACP] + 2'-(5''-triphospho-alpha-D-ribosyl)-3'-dephospho-CoA = holo-[malonate decarboxylase ACP] + diphosphate. Its function is as follows. Transfers 2'-(5-triphosphoribosyl)-3'-dephosphocoenzyme-A to the apo-[acyl-carrier-protein] of the malonate decarboxylase to yield holo-[acyl-carrier-protein]. This chain is Phosphoribosyl-dephospho-CoA transferase, found in Bradyrhizobium diazoefficiens (strain JCM 10833 / BCRC 13528 / IAM 13628 / NBRC 14792 / USDA 110).